Consider the following 410-residue polypeptide: Argininosuccinate synthase (410 aa).

ATP contacts are provided by residues 14–22 (AYSGGLDTS) and A41. Y92 and S97 together coordinate L-citrulline. ATP is bound at residue G122. L-aspartate is bound by residues T124, N128, and D129. Residue N128 coordinates L-citrulline. L-citrulline-binding residues include R132, S183, S192, E268, and Y280.

Belongs to the argininosuccinate synthase family. Type 1 subfamily. As to quaternary structure, homotetramer.

It localises to the cytoplasm. The enzyme catalyses L-citrulline + L-aspartate + ATP = 2-(N(omega)-L-arginino)succinate + AMP + diphosphate + H(+). It functions in the pathway amino-acid biosynthesis; L-arginine biosynthesis; L-arginine from L-ornithine and carbamoyl phosphate: step 2/3. In Parvibaculum lavamentivorans (strain DS-1 / DSM 13023 / NCIMB 13966), this protein is Argininosuccinate synthase.